The chain runs to 567 residues: Cytochrome P450 monooxygenase 231 (567 aa).

Residues 3 to 23 (VSTNELAILAIVLLATGVLFY) form a helical membrane-spanning segment. N81 and N223 each carry an N-linked (GlcNAc...) asparagine glycan. Residue C475 participates in heme binding.

The protein belongs to the cytochrome P450 family. Requires heme as cofactor.

It localises to the membrane. It functions in the pathway secondary metabolite biosynthesis. Cytochrome P450 monooxygenase that is able to use anthracene, carbazole, pyrene, and phenanthrene as substrates for oxidation. These multifunctional properties against a series of polycyclic aromatic hydrocarbons (PAHs) suggest that CYP231 would play important roles, at least in part, in fungal metabolic systems involved in xenobiotic detoxification. This chain is Cytochrome P450 monooxygenase 231, found in Postia placenta (strain ATCC 44394 / Madison 698-R) (Brown rot fungus).